Reading from the N-terminus, the 364-residue chain is Methylthioribose-1-phosphate isomerase (364 aa).

Residues 53 to 55 (RGA), Arg-90, and Gln-203 each bind substrate. The active-site Proton donor is the Asp-244. Substrate is bound at residue 254–255 (NK).

It belongs to the eIF-2B alpha/beta/delta subunits family. MtnA subfamily.

The enzyme catalyses 5-(methylsulfanyl)-alpha-D-ribose 1-phosphate = 5-(methylsulfanyl)-D-ribulose 1-phosphate. The protein operates within amino-acid biosynthesis; L-methionine biosynthesis via salvage pathway; L-methionine from S-methyl-5-thio-alpha-D-ribose 1-phosphate: step 1/6. Its function is as follows. Catalyzes the interconversion of methylthioribose-1-phosphate (MTR-1-P) into methylthioribulose-1-phosphate (MTRu-1-P). In Rhizobium meliloti (strain 1021) (Ensifer meliloti), this protein is Methylthioribose-1-phosphate isomerase.